We begin with the raw amino-acid sequence, 146 residues long: SMR1 protein (146 aa).

The N-terminal stretch at 1–22 is a signal peptide; the sequence is MKSLYLIFGLWILLACFQSGEG. 2 disordered regions span residues 23-43 and 99-146; these read VRGPRRQHNPRRQQDPSTLPH and TAPD…GGGK. Residues 109 to 139 are compositionally biased toward polar residues; that stretch reads PPTQLHSTEQANTKTDAKISNTTATTQNSTD. Residues Asn129 and Asn136 are each glycosylated (N-linked (GlcNAc...) asparagine).

In terms of processing, several O-linked glycosylation sites might be present in the C-terminal part. As to expression, expressed predominantly in the acinar cells of the submandibular gland and to lesser extent in the prostate.

It is found in the secreted. In terms of biological role, sialorphin may be involved in the modulation of mineral balance between at least four systems: kidney, bone, tooth and circulation. Functionally, submandibular gland peptide T is able to directly or indirectly down-regulate cardiovascular depression induced by septic shock (endotoxin stimuli), or anaphylactic challenge (nematode antigen sensitization). Its function is as follows. Sialorphin is an endogenous inhibitor of neprilysin. Inhibits the breakdown of Met-enkephalin and substance P in isolated tissue from the dorsal zone of the rat spinal cord. Has an analgesic effect when administered to rats by intravenous injection. This is SMR1 protein (Vcsa1) from Rattus norvegicus (Rat).